Reading from the N-terminus, the 527-residue chain is UDP-glucuronosyltransferase 2A3 (527 aa).

The signal sequence occupies residues 1–23 (MRSEKSALVFLLLQLFCVGCGFC). Residues 24 to 486 (GKVLVWPCDM…AAHNLTWFQH (463 aa)) lie on the Extracellular side of the membrane. Asparagine 313 carries N-linked (GlcNAc...) asparagine glycosylation. Residues 487–507 (YSIDVIGFLLACVATAIFLFT) form a helical membrane-spanning segment. Topologically, residues 508–523 (KCCLFSCQKFNKTRKI) are cytoplasmic.

This sequence belongs to the UDP-glycosyltransferase family.

It is found in the membrane. The enzyme catalyses glucuronate acceptor + UDP-alpha-D-glucuronate = acceptor beta-D-glucuronoside + UDP + H(+). In terms of biological role, UDP-glucuronosyltransferases catalyze phase II biotransformation reactions in which lipophilic substrates are conjugated with glucuronic acid to increase water solubility and enhance excretion. They are of major importance in the conjugation and subsequent elimination of potentially toxic xenobiotics and endogenous compounds. The polypeptide is UDP-glucuronosyltransferase 2A3 (UGT2A3) (Pongo abelii (Sumatran orangutan)).